A 406-amino-acid polypeptide reads, in one-letter code: Renin (406 aa).

A signal peptide spans 1–23 (MDGWRRMPRWGLLLLLWGSCTFG). Positions 24–66 (LPTDTTTFKRIFLKRMPSIRESLKERGVDMARLGPEWSQPMKR) are cleaved as a propeptide — activation peptide. Asn-71 carries an N-linked (GlcNAc...) asparagine glycan. Residues 86–403 (YYGEIGIGTP…DRRNNRIGFA (318 aa)) form the Peptidase A1 domain. Asp-104 is a catalytic residue. Cys-117 and Cys-124 are disulfide-bonded. The N-linked (GlcNAc...) asparagine glycan is linked to Asn-141. Cys-283 and Cys-287 form a disulfide bridge. Asp-292 is a catalytic residue. Cys-325 and Cys-362 are joined by a disulfide.

The protein belongs to the peptidase A1 family. As to quaternary structure, interacts with ATP6AP2.

It is found in the secreted. Its subcellular location is the membrane. The enzyme catalyses Cleavage of Leu-|-Xaa bond in angiotensinogen to generate angiotensin I.. Its activity is regulated as follows. Interaction with ATP6AP2 results in a 5-fold increased efficiency in angiotensinogen processing. Functionally, renin is a highly specific endopeptidase, whose only known function is to generate angiotensin I from angiotensinogen in the plasma, initiating a cascade of reactions that produce an elevation of blood pressure and increased sodium retention by the kidney. The chain is Renin (REN) from Macaca mulatta (Rhesus macaque).